The sequence spans 400 residues: FPYQGSSIILESGNVNDYEVVYPRKVTALPKGAVQQKYEDAMQYEFKVNGEPVVLHLEKNKGLFSKDYSEIHYSPDGRRITTHPLVEDHCYYRGHIRNDADSTASISACNGLKGHFKLRGETYLIEPMKISNSEAHAVYKYENVEKEDEAHKMCGVTQNWESYEPIKKASQLIVSTEFQRYMEIVIVVDHSMYTKYKGDSDKIKAWVYEMINTISESYRYLYIDIIVSALEMWSEKDLINVETSAENTLKSFGEWRAKDLIHRISHDNAQLLTATDFDGPTIGLAYVASMCDPKRSVGVVQDHSSVNHLVAITLAHEIAHNLGVHHDEGSCSCGSGYTCIMSPVINSEVIKYFSDCSYIQCREYISKENPPCILNKPLRTDTVSTPVSGNELLEAGKDYD.

Positions 1 to 6 (FPYQGS) are cleaved as a signal peptide. Positions 7-176 (SIILESGNVN…KKASQLIVST (170 aa)) are excised as a propeptide. The region spanning 180 to 377 (RYMEIVIVVD…ENPPCILNKP (198 aa)) is the Peptidase M12B domain. Glu-183 and Asp-267 together coordinate Ca(2+). 3 cysteine pairs are disulfide-bonded: Cys-291-Cys-372, Cys-331-Cys-356, and Cys-333-Cys-339. His-316 contacts Zn(2+). Glu-317 is a catalytic residue. Zn(2+) is bound by residues His-320 and His-326. Positions 372, 375, 387, 390, 392, 394, and 400 each coordinate Ca(2+). The propeptide occupies 378–400 (LRTDTVSTPVSGNELLEAGKDYD).

The protein belongs to the venom metalloproteinase (M12B) family. P-I subfamily. Monomer. It depends on Zn(2+) as a cofactor. Expressed by the venom gland.

It localises to the secreted. Its function is as follows. Snake venom metalloproteinase that impairs hemostasis in the envenomed animal. The protein is Snake venom metalloproteinase H1 of Deinagkistrodon acutus (Hundred-pace snake).